We begin with the raw amino-acid sequence, 26 residues long: uncharacterized protein (26 aa).

The protein localises to the plastid. It is found in the chloroplast. This is an uncharacterized protein from Trieres chinensis (Marine centric diatom).